Reading from the N-terminus, the 479-residue chain is Ribosomal RNA small subunit methyltransferase F (479 aa).

Residues 125 to 131 (AAAPGSK), glutamate 149, aspartate 176, and aspartate 194 each bind S-adenosyl-L-methionine. The Nucleophile role is filled by cysteine 247.

It belongs to the class I-like SAM-binding methyltransferase superfamily. RsmB/NOP family.

The protein resides in the cytoplasm. It catalyses the reaction cytidine(1407) in 16S rRNA + S-adenosyl-L-methionine = 5-methylcytidine(1407) in 16S rRNA + S-adenosyl-L-homocysteine + H(+). Functionally, specifically methylates the cytosine at position 1407 (m5C1407) of 16S rRNA. The chain is Ribosomal RNA small subunit methyltransferase F from Shigella boydii serotype 18 (strain CDC 3083-94 / BS512).